The primary structure comprises 82 residues: uncharacterized protein (82 aa).

The protein to M.thermoautotrophicum MTH386.

This is an uncharacterized protein from Methanocaldococcus jannaschii (strain ATCC 43067 / DSM 2661 / JAL-1 / JCM 10045 / NBRC 100440) (Methanococcus jannaschii).